The chain runs to 380 residues: Dynactin subunit 2 (380 aa).

A disordered region spans residues 1 to 32; sequence MADPKFQNLPGIAYDQPDVYETPDDPELDTSD. Acidic residues predominate over residues 21 to 32; sequence ETPDDPELDTSD. A phosphoserine mark is found at Ser49, Ser58, and Ser86. 2 coiled-coil regions span residues 100-135 and 353-377; these read VQKCQRLQIEMNELLNEVAALQVDRKVADEEKQSYD and ETFAQNLETINSKVAKVEQRVAAIS.

It belongs to the dynactin subunit 2 family. In terms of assembly, subunit of dynactin, a multiprotein complex associated with dynein.

It localises to the cytoplasm. The protein resides in the cytoskeleton. Its subcellular location is the membrane. Modulates cytoplasmic dynein binding to an organelle, and plays a role in prometaphase chromosome alignment and spindle organization during mitosis. May play a role in synapse formation during brain development. The sequence is that of Dynactin subunit 2 from Drosophila melanogaster (Fruit fly).